Reading from the N-terminus, the 330-residue chain is Induced myeloid leukemia cell differentiation protein Mcl-1 homolog (330 aa).

The segment at 85–155 (LAVPPEEMAA…PPEEEDDELY (71 aa)) is PEST-like. Ser-101 carries the post-translational modification Phosphoserine. Residue Lys-116 forms a Glycyl lysine isopeptide (Lys-Gly) (interchain with G-Cter in ubiquitin) linkage. The disordered stretch occupies residues 129–153 (EAAKSSGADGSLPSTPPPPEEEDDE). Residue Ser-139 is modified to Phosphoserine; by GSK3-alpha and GSK3-beta. Ser-142 carries the phosphoserine modification. Thr-143 is modified (phosphothreonine; by MAPK). Glycyl lysine isopeptide (Lys-Gly) (interchain with G-Cter in ubiquitin) cross-links involve residues Lys-174 and Lys-177. Positions 189-203 (ALETLRRVGDGVQRN) match the BH3 motif. The BH1 signature appears at 232 to 252 (HVFKDGVTNWGRIVTLISFGA). Positions 284–299 (DWLVKQRGWDGFVEFF) match the BH2 motif. Residues 307 to 329 (GIRNVLLAFAGVAGVGAGLAYLI) form a helical membrane-spanning segment.

Belongs to the Bcl-2 family. In terms of assembly, interacts with HIF3A (via C-terminus domain). Interacts with BOK, BIK, BAX, BAK1, and TPT1. Interacts with unphosphorylated BAD. Interacts with BMF, BBC3 and PMAIP1. Interacts with BOP. Interacts with BCL2L11; may sequester BCL2L11 to prevent its pro-apoptotic activity. Interacts with GIMAP5 and HSPA8/HSC70; the interaction between HSPA8 and MCL1 is impaired in the absence of GIMAP5. Cleaved by CASP3 during apoptosis, yielding a pro-apoptotic C-terminal fragment. In terms of processing, rapidly degraded in the absence of phosphorylation in the PEST region. Post-translationally, phosphorylated on Ser-139, by GSK3, in response to IL3/interleukin-3 withdrawal. Phosphorylation at Ser-139 induces ubiquitination and proteasomal degradation, abrogating the anti-apoptotic activity. Treatment with taxol or okadaic acid induces phosphorylation on additional sites. Ubiquitinated. Ubiquitination is induced by phosphorylation at Ser-139. Deubiquitinated by USP20; leading to increased stability. In terms of tissue distribution, ubiquitous. Highly expressed in heart, spleen, lung, liver, skeletal muscle and kidney. Detected at lower levels in brain, ovary, oviduct and testis.

The protein localises to the membrane. It is found in the cytoplasm. It localises to the mitochondrion. Its subcellular location is the nucleus. The protein resides in the nucleoplasm. In terms of biological role, involved in the regulation of apoptosis versus cell survival, and in the maintenance of viability but not of proliferation. Mediates its effects by interactions with a number of other regulators of apoptosis. This chain is Induced myeloid leukemia cell differentiation protein Mcl-1 homolog (Mcl1), found in Rattus norvegicus (Rat).